The primary structure comprises 1120 residues: Probable leucine-rich repeat receptor-like protein kinase At1g35710 (1120 aa).

Positions 1–29 (MGFAEKNLYDFRFLLFISIILSCSISASA) are cleaved as a signal peptide. The Extracellular segment spans residues 30-783 (TIAEANALLK…RELKKPKKNG (754 aa)). 4 N-linked (GlcNAc...) asparagine glycosylation sites follow: asparagine 46, asparagine 60, asparagine 83, and asparagine 124. LRR repeat units follow at residues 78 to 100 (SIEE…PFIS), 103 to 125 (NLAY…FGNL), 127 to 150 (KLIY…GNLK), 151 to 172 (NLTV…ELGN), 175 to 198 (SMTD…GNLK), 199 to 221 (NLMV…LGNM), 223 to 246 (SMTD…GNLK), 247 to 269 (NLMV…IGNM), 271 to 294 (SMTN…GNLK), 295 to 317 (NLTL…LGNI), 319 to 342 (SMID…GNLK), 343 to 365 (NLTI…LGNM), 367 to 389 (SMID…FGNL), 391 to 412 (NLTY…ELGN), 415 to 437 (SMIN…FGNF), 439 to 461 (KLES…VANS), 463 to 484 (HLTT…TVCK), 487 to 510 (KLQN…RDCK), 535 to 557 (DLNF…WEKS), 559 to 581 (KLGA…IWNM), 583 to 605 (QLVE…IGNL), 607 to 630 (NLSR…SFLT), 631 to 652 (NLES…TFDS), 655 to 677 (KLHD…SKLT), 678 to 701 (QLTQ…SSLQ), 702 to 723 (SLDK…TFEG), and 726 to 748 (ALTN…PTFR). N-linked (GlcNAc...) asparagine glycosylation is present at asparagine 151. N-linked (GlcNAc...) asparagine glycosylation occurs at asparagine 295. The N-linked (GlcNAc...) asparagine glycan is linked to asparagine 343. Asparagine 391, asparagine 436, asparagine 460, asparagine 473, and asparagine 490 each carry an N-linked (GlcNAc...) asparagine glycan. N-linked (GlcNAc...) asparagine glycans are attached at residues asparagine 569, asparagine 580, asparagine 604, asparagine 607, asparagine 641, and asparagine 660. Asparagine 712 carries an N-linked (GlcNAc...) asparagine glycan. A helical transmembrane segment spans residues 784 to 804 (NLVVWILVPILGVLVILSICA). At 805-1120 (NTFTYCIRKR…TMLSISTTFS (316 aa)) the chain is on the cytoplasmic side. Phosphothreonine is present on threonine 848. In terms of domain architecture, Protein kinase spans 851–1120 (FDPTHLIGTG…TMLSISTTFS (270 aa)). Residues 857–865 (IGTGGYSKV) and lysine 878 each bind ATP. Residues tyrosine 929 and tyrosine 968 each carry the phosphotyrosine modification. The active-site Proton acceptor is the aspartate 981. Serine 1014 carries the post-translational modification Phosphoserine. Residues tyrosine 1022 and tyrosine 1029 each carry the phosphotyrosine modification. Threonine 1030 carries the post-translational modification Phosphothreonine.

The protein belongs to the protein kinase superfamily. Ser/Thr protein kinase family.

The protein localises to the membrane. It catalyses the reaction L-seryl-[protein] + ATP = O-phospho-L-seryl-[protein] + ADP + H(+). The enzyme catalyses L-threonyl-[protein] + ATP = O-phospho-L-threonyl-[protein] + ADP + H(+). The protein is Probable leucine-rich repeat receptor-like protein kinase At1g35710 of Arabidopsis thaliana (Mouse-ear cress).